The primary structure comprises 339 residues: Phenylalanine--tRNA ligase alpha subunit (339 aa).

Glu250 serves as a coordination point for Mg(2+).

Belongs to the class-II aminoacyl-tRNA synthetase family. Phe-tRNA synthetase alpha subunit type 1 subfamily. As to quaternary structure, tetramer of two alpha and two beta subunits. Mg(2+) serves as cofactor.

The protein localises to the cytoplasm. The catalysed reaction is tRNA(Phe) + L-phenylalanine + ATP = L-phenylalanyl-tRNA(Phe) + AMP + diphosphate + H(+). The protein is Phenylalanine--tRNA ligase alpha subunit of Christiangramia forsetii (strain DSM 17595 / CGMCC 1.15422 / KT0803) (Gramella forsetii).